Consider the following 63-residue polypeptide: Large ribosomal subunit protein bL35 (63 aa).

Residues methionine 1 to lysine 22 are disordered.

It belongs to the bacterial ribosomal protein bL35 family.

The chain is Large ribosomal subunit protein bL35 from Marinobacter nauticus (strain ATCC 700491 / DSM 11845 / VT8) (Marinobacter aquaeolei).